The sequence spans 178 residues: MTDPIEQAFERIRAEAMRRNGSVPDLNKNDAFRRPPAPKGGVEKRKKGRASGLDGRQKRYVRGAESLGSVLNKEIQRRGWGKDIAGGWVTSNWEELVGAKIAQHTRVEMIKDKKLFITCDSTAWATNLRMMQRQILQVIAEKVGPNIITELRIFGPQAPSWRKGPLHVKGRGPRDTYG.

The disordered stretch occupies residues 16 to 55; that stretch reads AMRRNGSVPDLNKNDAFRRPPAPKGGVEKRKKGRASGLDG.

The protein belongs to the UPF0232 family.

The chain is UPF0232 protein cgR_0005 from Corynebacterium glutamicum (strain R).